The chain runs to 489 residues: Cryptochrome DASH (489 aa).

Residues 6–140 form the Photolyase/cryptochrome alpha/beta domain; the sequence is PTVLVWFRND…EAKGYWGSTL (135 aa).

It belongs to the DNA photolyase class-1 family. The cofactor is FAD. It depends on (6R)-5,10-methylene-5,6,7,8-tetrahydrofolate as a cofactor.

Its function is as follows. May have a photoreceptor function. Binds DNA; represses transcription of at least 8 genes, including slr0364 and slr1866. Does not encode a DNA photolyase function. Its disruption does not affect circadian rhythm. The chain is Cryptochrome DASH (cry) from Synechocystis sp. (strain ATCC 27184 / PCC 6803 / Kazusa).